Here is a 274-residue protein sequence, read N- to C-terminus: Elongation factor Ts (274 aa).

The segment at 79 to 82 (TDFV) is involved in Mg(2+) ion dislocation from EF-Tu.

It belongs to the EF-Ts family.

It is found in the cytoplasm. Associates with the EF-Tu.GDP complex and induces the exchange of GDP to GTP. It remains bound to the aminoacyl-tRNA.EF-Tu.GTP complex up to the GTP hydrolysis stage on the ribosome. The sequence is that of Elongation factor Ts from Aster yellows witches'-broom phytoplasma (strain AYWB).